The sequence spans 351 residues: Anthranilate phosphoribosyltransferase (351 aa).

5-phospho-alpha-D-ribose 1-diphosphate is bound by residues Gly80, 83–84, Thr88, 90–93, 108–116, and Ser120; these read GD, NIST, and KHGNRSITS. Residue Gly80 coordinates anthranilate. Ser92 lines the Mg(2+) pocket. Asn111 contributes to the anthranilate binding site. An anthranilate-binding site is contributed by Arg166. The Mg(2+) site is built by Asp229 and Glu230.

It belongs to the anthranilate phosphoribosyltransferase family. In terms of assembly, homodimer. It depends on Mg(2+) as a cofactor.

The catalysed reaction is N-(5-phospho-beta-D-ribosyl)anthranilate + diphosphate = 5-phospho-alpha-D-ribose 1-diphosphate + anthranilate. The protein operates within amino-acid biosynthesis; L-tryptophan biosynthesis; L-tryptophan from chorismate: step 2/5. Its function is as follows. Catalyzes the transfer of the phosphoribosyl group of 5-phosphorylribose-1-pyrophosphate (PRPP) to anthranilate to yield N-(5'-phosphoribosyl)-anthranilate (PRA). In Chlorobaculum tepidum (strain ATCC 49652 / DSM 12025 / NBRC 103806 / TLS) (Chlorobium tepidum), this protein is Anthranilate phosphoribosyltransferase.